Consider the following 357-residue polypeptide: UDP-N-acetylglucosamine--N-acetylmuramyl-(pentapeptide) pyrophosphoryl-undecaprenol N-acetylglucosamine transferase (357 aa).

UDP-N-acetyl-alpha-D-glucosamine-binding positions include 13–15 (SAG), Arg166, Ser197, and Gln292.

The protein belongs to the glycosyltransferase 28 family. MurG subfamily.

The protein resides in the cell membrane. The catalysed reaction is di-trans,octa-cis-undecaprenyl diphospho-N-acetyl-alpha-D-muramoyl-L-alanyl-D-glutamyl-meso-2,6-diaminopimeloyl-D-alanyl-D-alanine + UDP-N-acetyl-alpha-D-glucosamine = di-trans,octa-cis-undecaprenyl diphospho-[N-acetyl-alpha-D-glucosaminyl-(1-&gt;4)]-N-acetyl-alpha-D-muramoyl-L-alanyl-D-glutamyl-meso-2,6-diaminopimeloyl-D-alanyl-D-alanine + UDP + H(+). The protein operates within cell wall biogenesis; peptidoglycan biosynthesis. In terms of biological role, cell wall formation. Catalyzes the transfer of a GlcNAc subunit on undecaprenyl-pyrophosphoryl-MurNAc-pentapeptide (lipid intermediate I) to form undecaprenyl-pyrophosphoryl-MurNAc-(pentapeptide)GlcNAc (lipid intermediate II). This chain is UDP-N-acetylglucosamine--N-acetylmuramyl-(pentapeptide) pyrophosphoryl-undecaprenol N-acetylglucosamine transferase, found in Clostridium novyi (strain NT).